A 762-amino-acid chain; its full sequence is MALHTSNLGYPRIGLQREWKKTLEAFWAQKIDEQQLITTMKEIHLEHLNVQKEKGIDFIPIGDFTYYDHVLDTAYMLGFIPSRFSNFTSYLDIYFAMARGSKDHVASEMTKWFNTNYHYIVPEYEEGLNISLKDNRPLRLYEEAKRELGIDGKPVILGPYTFLKLAKGYTQDQFPTILHKLIAPYVQLLTELHKAGARLIQIDEPIFVSLTKEEMIEAKKLYEAIQKEVPSANLILQTYFDSVEENYTELITFPVSGIGLDFVHGKEGNIKSIVEHGFPAEKTLAIGCIDGRNIWRANLDEVFALFETLKAHIEPKDWIIQPSCSLLHTPVDKTEETHLSPELFDALAFANQKLEELTLIKRGLSEGVNSIEIEITTYRNSHEAVRSSAARNRKDVQTARASLKEEDFSRPLPFEQRYDLQQKALQLPLLPTTTIGSFPQTPEVRQTRKQWRNGEITNEQYEHFIEQETEKWIRHQENIGLDVLVHGEFERTDMVEYFGERLAGFSFTKNGWVQSYGSRCVKPPIIFGDVAFISDMTVKETVYAQSLTNKVVKGMLTGPVTILNWSFVRNDLPRKEVCYQIALALRHEIERLESSGIRIIQVDEPALREGMPLKEKDWDSYIEWAVQSFRLATASVANETQIHTHMCYSNFEDIVDAIRALDADVISIETSRSHGEFIHTLEQTTYEKGIGLGVYDIHSPRVPSKEEMYTIVEQSLKVCNPKYFWINPDCGLKTRRTEEVLPALEHMVEAAKEARTLLKTNA.

Residues 17 to 20 (REWK) and K111 contribute to the 5-methyltetrahydropteroyltri-L-glutamate site. L-homocysteine-binding positions include 435–437 (IGS) and E488. Residues 435-437 (IGS) and E488 each bind L-methionine. 5-methyltetrahydropteroyltri-L-glutamate-binding positions include 519–520 (RC) and W565. D603 is a binding site for L-homocysteine. D603 contributes to the L-methionine binding site. E609 lines the 5-methyltetrahydropteroyltri-L-glutamate pocket. The Zn(2+) site is built by H645, C647, and E669. H698 acts as the Proton donor in catalysis. C730 is a binding site for Zn(2+).

This sequence belongs to the vitamin-B12 independent methionine synthase family. The cofactor is Zn(2+).

It catalyses the reaction 5-methyltetrahydropteroyltri-L-glutamate + L-homocysteine = tetrahydropteroyltri-L-glutamate + L-methionine. The protein operates within amino-acid biosynthesis; L-methionine biosynthesis via de novo pathway; L-methionine from L-homocysteine (MetE route): step 1/1. Catalyzes the transfer of a methyl group from 5-methyltetrahydrofolate to homocysteine resulting in methionine formation. The sequence is that of 5-methyltetrahydropteroyltriglutamate--homocysteine methyltransferase from Bacillus cytotoxicus (strain DSM 22905 / CIP 110041 / 391-98 / NVH 391-98).